The following is a 200-amino-acid chain: Early E1A 21 kDa protein (200 aa).

The tract at residues 78-98 is disordered; the sequence is QDSTTATSAEEPSASTDSISS. An LXCXE motif, interaction with host RB1 motif is present at residues 114-118; sequence LRCYE. A zinc finger spans residues 136–151; that stretch reads CSTCGGHEVNGFCSLC. Residues 196–200 carry the Nuclear localization signal motif; the sequence is SRHDE.

In terms of assembly, interaction with host RB1 induces the aberrant dissociation of RB1-E2F1 complex thereby disrupting RB1's activity.

Functionally, E1A protein has both transforming and trans-activating activities. Plays a role in viral genome replication by driving entry of quiescent cells into the cell cycle. Disrupts the function of host retinoblastoma protein RB1/pRb and isoform early E1A 26 kDa protein stabilizes TP53, which are key regulators of the cell cycle. Induces the disassembly of the E2F1 transcription factors from RB1 by direct competition for the same binding site on RB1, with subsequent transcriptional activation of E2F1-regulated S-phase genes. Inactivation of the ability of RB1 to arrest the cell cycle is critical for cellular transformation, uncontrolled cellular growth and proliferation induced by viral infection. Stimulation of progression from G1 to S phase allows the virus to efficiently use the cellular DNA replicating machinery to achieve viral genome replication. This chain is Early E1A 21 kDa protein, found in Murine adenovirus A serotype 1 (MAdV-1).